We begin with the raw amino-acid sequence, 153 residues long: UPF0311 protein RPA1785 (153 aa).

Belongs to the UPF0311 family.

This Rhodopseudomonas palustris (strain ATCC BAA-98 / CGA009) protein is UPF0311 protein RPA1785.